A 147-amino-acid polypeptide reads, in one-letter code: Hemoglobin subunit epsilon (147 aa).

The Globin domain occupies 3-147 (HFTAEEKSTI…VATALAHKYH (145 aa)). A phosphoserine mark is found at S14 and S51. 2 residues coordinate heme b: H64 and H93.

It belongs to the globin family. Heterotetramer of two alpha chains and two epsilon chains in early embryonic hemoglobin Gower-2; two zeta chains and two epsilon chains in early embryonic hemoglobin Gower-1. Red blood cells.

Its function is as follows. The epsilon chain is a beta-type chain of early mammalian embryonic hemoglobin. The chain is Hemoglobin subunit epsilon (HBE1) from Cheirogaleus medius (Fat-tailed dwarf lemur).